A 467-amino-acid polypeptide reads, in one-letter code: MNGQKDVVQVSEAWQTLSTYLPPVTADRDYWWQLTGRHVAALVEAAGYPIEKQYEALIFHYHWTVPYMGPAPKADGTPATWKSLLGLDGSPIEYSWKWNTTRSEPDVRYVTEPIGQHPGSHLDPLNQHALRELLQRFSKNMPSSDMNMSWVNHFFARLYDHDNTRYIQEAAAGSSRSTATSVQLGTEFLRRGIGFKTYFFPRKLGQVDDISISQYGASMSQLDVDETSWDARKALVEFLETNPEGKSLRPFSLAVDNVAPSQSRLKWYFHTLHTSIDSVREIMTLGGRINGIDKQLEELEDLIRVVAGLASDFPTNAEIPLPKKSDVYDQSAKDNFGELEDVLTGYLYYFDIAPGQGKLPEVKWFIPSRHYGPNDRELASALGAWMEARGRGAYNEPYMKMLHTLSAHRGLGDGKGLQTFISCLFKPSGDLDITTYLGAEAFHPGRVAKMAKPNGRSPRATLRRGDD.

E93 contacts L-tryptophan. 6 residues coordinate dimethylallyl diphosphate: R108, K196, Y198, K266, Y268, and Y436.

It belongs to the tryptophan dimethylallyltransferase family.

The protein operates within secondary metabolite biosynthesis. Prenyltransferase; part of the gene cluster that mediates the biosynthesis of dibenzodioxocinones such as pestalotiollide B, a novel class of inhibitors against cholesterol ester transfer protein (CEPT). The biosynthesis initiates from condensation of acetate and malonate units catalyzed by the non-reducing PKS pks8/GME11356. Pks8/GME11356 lacks a thioesterase (TE) domain, which is important to the cyclizing of the third ring of atrochrysone carboxylic acid, and the esterase GME11355 might play the role of TE and catalyzes the cyclization reaction of the C ring. The lactamase-like protein GME11357 (or other beta-lactamases in Pestalotiopsis microspora) probably hydrolyzes the thioester bond between the ACP of pks8/GME11356 and the intermediate to release atrochrysone carboxylic acid, which is spontaneously dehydrates to form endocrocin anthrone. Endocrocin anthrone is further converted to emodin via the endocrocin intermediate. Emodin is then oxidized by several enzymes such as the Baeyer-Villiger oxidase GME11358, the oxidoreductase GME11367, the short chain dehydrogenase/reductase GME11373, as well as by other oxidoreductases from the cluster, to modify the A and C rings and open the B ring, and finally yield monodictyphenone. The prenyltransferase GME11375 may catalyze the addition reaction between the C5 side chains and the carbon bone of dibenzodioxocinones. The remaining biochemical reactions to the final product dibenzodioxocinones should be methylation catalyzed by methyltransferase GME11366 and reduction and lactonization reaction catalyzed by a series of oxidordeuctases. The sequence is that of Prenyltransferase GME11375 from Pestalotiopsis microspora.